Reading from the N-terminus, the 73-residue chain is Potassium channel toxin alpha-KTx 27.4 (73 aa).

Residues 1-26 (MKFLFLTLVLLYFTAILVFIVFPSYA) form the signal peptide.

It belongs to the short scorpion toxin superfamily. Potassium channel inhibitor family. Alpha-KTx 27 subfamily. Post-translationally, contains 4 disulfide bonds. As to expression, expressed by the venom gland.

The protein resides in the secreted. This Mesobuthus gibbosus (Mediterranean checkered scorpion) protein is Potassium channel toxin alpha-KTx 27.4.